The chain runs to 368 residues: Endophilin-A2 (368 aa).

Residues 1–21 form a membrane-binding amphipathic helix region; sequence MSVAGLKKQFYKASQLVSEKV. A BAR domain is found at 18-249; sequence SEKVGGAEGT…LKRRMREASS (232 aa). A required for dimerization upon membrane association region spans residues 60–87; it reads PNPASRAKLTMLNTVSKIRGQVKNPGYP. The stretch at 181-250 forms a coiled coil; it reads EELRQAMEKF…KRRMREASSR (70 aa). The tract at residues 218–254 is interaction with ARC; the sequence is LVDAQLDYHRQAVQILDELADKLKRRMREASSRPKRE. Residues 243–308 form a disordered region; that stretch reads RMREASSRPK…PSRSMPPLDQ (66 aa). Residues 245 to 263 are compositionally biased toward basic and acidic residues; the sequence is REASSRPKREYKPKPRELL. Phosphoserine occurs at positions 288 and 292. A Phosphothreonine modification is found at threonine 298. In terms of domain architecture, SH3 spans 306 to 365; sequence LDQPSCKALYDFEPENDGELGFHEGDIITLTNQIDENWYEGMLDGQSGFFPLSYVEVLVP. Tyrosine 315 is subject to Phosphotyrosine.

The protein belongs to the endophilin family. As to quaternary structure, interacts with ARC, SYNJ1 and DNM1. Interacts with PDCD6IP. Interacts with BIN2.

It localises to the cytoplasm. The protein localises to the early endosome membrane. It is found in the cell projection. Its subcellular location is the podosome. Functionally, implicated in endocytosis. May recruit other proteins to membranes with high curvature. The protein is Endophilin-A2 of Bos taurus (Bovine).